Consider the following 433-residue polypeptide: Agnestins efflux protein AgnL12 (433 aa).

Composition is skewed to polar residues over residues 1-10 and 25-40; these read MSRSTSTELQ and SIASSETASGSKPPST. Positions 1-40 are disordered; sequence MSRSTSTELQQELPASKEVPPDPTSIASSETASGSKPPST. A run of 12 helical transmembrane segments spans residues 47-67, 87-107, 116-136, 141-161, 174-194, 205-225, 248-268, 285-305, 309-329, 335-355, 370-390, and 401-421; these read ILVLVGSFLVTFCSVGFTNAF, ISWIGSFNIFCMFGCTFISGY, LLICFGSLVMVFALFMLSLST, IFLTQAFLFGVGISFVLLPAM, LAMGIIVSGSSLGGVIWPIAL, WTVRIAAFIMLPLLGLACLAI, VMIFLAIGLFLIFLGLFSPFF, FYMVSVVNASSLFGRILPGLI, VGNYNVLFMVAVFSGLVACCW, VGGIVVFSLAYGLASGAVISL, GVAMGVVMTFLSIAGLVGTPI, and LGLSLFSGLVMLLGSVFILLA.

This sequence belongs to the major facilitator superfamily. Monocarboxylate porter (TC 2.A.1.13) family.

The protein resides in the cell membrane. Functionally, efflux pump that may be involved in the secretion of agnestins, dihydroxy-xanthone metabolites. The sequence is that of Agnestins efflux protein AgnL12 from Paecilomyces divaricatus (Penicillium divaricatum).